The chain runs to 97 residues: Eotaxin (97 aa).

The N-terminal stretch at 1–23 (MQLSTALLFLLLTATSFTSQVLA) is a signal peptide. 2 disulfide bridges follow: C32/C57 and C33/C73. Residue T94 is glycosylated (O-linked (GalNAc...) threonine).

The protein belongs to the intercrine beta (chemokine CC) family.

It localises to the secreted. In terms of biological role, in response to the presence of allergens, this protein directly promotes the accumulation of eosinophils (a prominent feature of allergic inflammatory reactions), but not lymphocytes, macrophages or neutrophils. Binds to CCR3. The chain is Eotaxin (Ccl11) from Rattus norvegicus (Rat).